We begin with the raw amino-acid sequence, 438 residues long: GTPase Obg (438 aa).

Positions 2–160 (SMFLDTAKIS…RELELELKIL (159 aa)) constitute an Obg domain. Residues 128–147 (NIRFATPRNPAPEIAENGEP) form a disordered region. The region spanning 161–338 (ADVGLVGFPS…LLDATANLLA (178 aa)) is the OBG-type G domain. Residues 167–174 (GFPSVGKS), 192–196 (FTTIV), 214–217 (DLPG), 284–287 (NKMD), and 319–321 (STL) each bind GTP. The Mg(2+) site is built by Ser-174 and Thr-194. The OCT domain maps to 360-438 (GFSEEEKAFE…IGNFEFEFVD (79 aa)).

Belongs to the TRAFAC class OBG-HflX-like GTPase superfamily. OBG GTPase family. As to quaternary structure, monomer. The cofactor is Mg(2+).

Its subcellular location is the cytoplasm. An essential GTPase which binds GTP, GDP and possibly (p)ppGpp with moderate affinity, with high nucleotide exchange rates and a fairly low GTP hydrolysis rate. Plays a role in control of the cell cycle, stress response, ribosome biogenesis and in those bacteria that undergo differentiation, in morphogenesis control. The protein is GTPase Obg of Streptococcus uberis (strain ATCC BAA-854 / 0140J).